The following is a 497-amino-acid chain: Indoleacetaldoxime dehydratase (497 aa).

A helical membrane pass occupies residues 2 to 20 (EMILSISLCLTTLITLLLL). Heme is bound at residue Cys439.

This sequence belongs to the cytochrome P450 family.

The protein localises to the membrane. It carries out the reaction (E)-(indol-3-yl)acetaldehyde oxime = (indol-3-yl)acetonitrile + H2O. Its function is as follows. Involved in the biosynthesis of the indole-derived phytoalexin camalexin. Catalyzes the conversion of indole-3-acetaldoxime to indole-3-acetonitrile. Required for resistance to A.brassicicola and B.cinerea. The chain is Indoleacetaldoxime dehydratase (CYP71A13) from Arabidopsis thaliana (Mouse-ear cress).